The chain runs to 377 residues: NADP-dependent oxidoreductase lnbE (377 aa).

Residues 170 to 173 (GGNG), 257 to 263 (LTNPRVS), and 293 to 295 (SPV) contribute to the NADP(+) site.

Belongs to the NADP-dependent oxidoreductase L4BD family.

The protein operates within secondary metabolite biosynthesis. Functionally, NADP-dependent oxidoreductase; part of the lnb gene cluster that mediates the biosynthesis of diastereomeric piperazines. Lna and lnb clusters encode sets of enzymes that produce overlapping sets of previously undescribed metabolites such as piperazinomycin-like metabolites or morpholine. The lna and lnb biosynthetic pathways appear to be part of a signaling network that controls the formation of sclerotia, a resilient overwintering structure. One primary function of the non-canonical nonribosomal peptide synthetases lnaA and lnbA consists in the reduction of L-tyrosine. The presence in the clusters of tailoring enzymes such as the oxidoreductases lnaB, lnbB, lnaE or lnbE, as well as of the cytochrome P450 monooxygenases lnaC, lnaD, or lnbC, might explain formation of various diastereomeric piperazines. This chain is NADP-dependent oxidoreductase lnbE, found in Aspergillus flavus (strain ATCC 200026 / FGSC A1120 / IAM 13836 / NRRL 3357 / JCM 12722 / SRRC 167).